The following is a 235-amino-acid chain: MLTLLAILAVSYIIGSIPTSLVAGKLLKGIDIRNFGSGNAGGTNAFRVLGWKPGLVVTLIDIVKGVVAAVSVVAFFRHHPIGAFPDMNEVALRLLAGMSAVIGHVFTLFAGFKGGKGVSTAAGMLIGIAPVSMLMVVGIFLLTVYISRHVSVASMLAAIAFPLIIAIRKYIFELGSGLDYYIGLFGSPISFHDSLDYHLMIFGLIVALAILYTHRTNIRRLISGTESRVTFGKKH.

6 helical membrane passes run 4-24, 56-76, 94-114, 122-142, 152-172, and 191-211; these read LLAI…LVAG, VVTL…VAFF, LLAG…GFKG, AGML…IFLL, VASM…KYIF, and FHDS…LAIL.

The protein belongs to the PlsY family. Probably interacts with PlsX.

The protein localises to the cell inner membrane. It catalyses the reaction an acyl phosphate + sn-glycerol 3-phosphate = a 1-acyl-sn-glycero-3-phosphate + phosphate. It participates in lipid metabolism; phospholipid metabolism. Its function is as follows. Catalyzes the transfer of an acyl group from acyl-phosphate (acyl-PO(4)) to glycerol-3-phosphate (G3P) to form lysophosphatidic acid (LPA). This enzyme utilizes acyl-phosphate as fatty acyl donor, but not acyl-CoA or acyl-ACP. In Pelodictyon phaeoclathratiforme (strain DSM 5477 / BU-1), this protein is Glycerol-3-phosphate acyltransferase.